Reading from the N-terminus, the 203-residue chain is N-(5'-phosphoribosyl)anthranilate isomerase (203 aa).

The protein belongs to the TrpF family.

The catalysed reaction is N-(5-phospho-beta-D-ribosyl)anthranilate = 1-(2-carboxyphenylamino)-1-deoxy-D-ribulose 5-phosphate. It functions in the pathway amino-acid biosynthesis; L-tryptophan biosynthesis; L-tryptophan from chorismate: step 3/5. The protein is N-(5'-phosphoribosyl)anthranilate isomerase of Sulfurihydrogenibium sp. (strain YO3AOP1).